A 282-amino-acid polypeptide reads, in one-letter code: Elongation factor Ts (282 aa).

Positions 80-83 (TDFV) are involved in Mg(2+) ion dislocation from EF-Tu.

Belongs to the EF-Ts family.

Its subcellular location is the cytoplasm. Its function is as follows. Associates with the EF-Tu.GDP complex and induces the exchange of GDP to GTP. It remains bound to the aminoacyl-tRNA.EF-Tu.GTP complex up to the GTP hydrolysis stage on the ribosome. This is Elongation factor Ts from Aliivibrio salmonicida (strain LFI1238) (Vibrio salmonicida (strain LFI1238)).